The primary structure comprises 521 residues: Probable glycogen synthase (521 aa).

This sequence belongs to the glycosyltransferase 1 family. Bacterial/plant glycogen synthase subfamily.

The enzyme catalyses [(1-&gt;4)-alpha-D-glucosyl](n) + ADP-alpha-D-glucose = [(1-&gt;4)-alpha-D-glucosyl](n+1) + ADP + H(+). It participates in glycan biosynthesis; glycogen biosynthesis. Its function is as follows. Synthesizes alpha-1,4-glucan chains using ADP-glucose. The protein is Probable glycogen synthase (glgA) of Methanocaldococcus jannaschii (strain ATCC 43067 / DSM 2661 / JAL-1 / JCM 10045 / NBRC 100440) (Methanococcus jannaschii).